The following is a 119-amino-acid chain: Holo-[acyl-carrier-protein] synthase (119 aa).

Residues Asp7 and Glu56 each contribute to the Mg(2+) site.

It belongs to the P-Pant transferase superfamily. AcpS family. The cofactor is Mg(2+).

It localises to the cytoplasm. It catalyses the reaction apo-[ACP] + CoA = holo-[ACP] + adenosine 3',5'-bisphosphate + H(+). Transfers the 4'-phosphopantetheine moiety from coenzyme A to a Ser of acyl-carrier-protein. The polypeptide is Holo-[acyl-carrier-protein] synthase (Chlamydia trachomatis serovar L2 (strain ATCC VR-902B / DSM 19102 / 434/Bu)).